The primary structure comprises 392 residues: Lipid-A-disaccharide synthase (392 aa).

It belongs to the LpxB family.

The catalysed reaction is a lipid X + a UDP-2-N,3-O-bis[(3R)-3-hydroxyacyl]-alpha-D-glucosamine = a lipid A disaccharide + UDP + H(+). Its pathway is bacterial outer membrane biogenesis; LPS lipid A biosynthesis. Its function is as follows. Condensation of UDP-2,3-diacylglucosamine and 2,3-diacylglucosamine-1-phosphate to form lipid A disaccharide, a precursor of lipid A, a phosphorylated glycolipid that anchors the lipopolysaccharide to the outer membrane of the cell. This chain is Lipid-A-disaccharide synthase, found in Syntrophotalea carbinolica (strain DSM 2380 / NBRC 103641 / GraBd1) (Pelobacter carbinolicus).